The sequence spans 501 residues: Cytochrome P450 4d2 (501 aa).

E311 and C449 together coordinate heme.

This sequence belongs to the cytochrome P450 family. Heme is required as a cofactor.

The protein resides in the endoplasmic reticulum membrane. The protein localises to the microsome membrane. Involved in the metabolism of insect hormones and in the breakdown of synthetic insecticides. The polypeptide is Cytochrome P450 4d2 (Cyp4d2) (Drosophila melanogaster (Fruit fly)).